The sequence spans 157 residues: Crossover junction endodeoxyribonuclease RuvC (157 aa).

Residues aspartate 7, glutamate 67, and aspartate 139 contribute to the active site. Mg(2+) contacts are provided by aspartate 7, glutamate 67, and aspartate 139.

It belongs to the RuvC family. In terms of assembly, homodimer which binds Holliday junction (HJ) DNA. The HJ becomes 2-fold symmetrical on binding to RuvC with unstacked arms; it has a different conformation from HJ DNA in complex with RuvA. In the full resolvosome a probable DNA-RuvA(4)-RuvB(12)-RuvC(2) complex forms which resolves the HJ. Mg(2+) serves as cofactor.

It is found in the cytoplasm. It catalyses the reaction Endonucleolytic cleavage at a junction such as a reciprocal single-stranded crossover between two homologous DNA duplexes (Holliday junction).. Functionally, the RuvA-RuvB-RuvC complex processes Holliday junction (HJ) DNA during genetic recombination and DNA repair. Endonuclease that resolves HJ intermediates. Cleaves cruciform DNA by making single-stranded nicks across the HJ at symmetrical positions within the homologous arms, yielding a 5'-phosphate and a 3'-hydroxyl group; requires a central core of homology in the junction. The consensus cleavage sequence is 5'-(A/T)TT(C/G)-3'. Cleavage occurs on the 3'-side of the TT dinucleotide at the point of strand exchange. HJ branch migration catalyzed by RuvA-RuvB allows RuvC to scan DNA until it finds its consensus sequence, where it cleaves and resolves the cruciform DNA. This chain is Crossover junction endodeoxyribonuclease RuvC, found in Prochlorococcus marinus (strain MIT 9301).